A 1368-amino-acid polypeptide reads, in one-letter code: Alpha-latrotoxin-Lg1a (1368 aa).

Positions 217-236 are helix H8 is the probable transmembrane region of the tetrameric pore inserted in the target cell membrane; the sequence is VLYAILYGTQTYVSVMFFLL. Cys-392 and Cys-1044 are disulfide-bonded. 20 ANK repeats span residues 469–500, 504–533, 538–568, 572–601, 605–635, 639–669, 674–704, 708–737, 741–770, 774–803, 807–837, 841–870, 874–903, 907–936, 953–981, 982–1011, 1013–1042, 1046–1075, 1079–1109, and 1115–1144; these read QGRT…DINQ, KGYT…SVNS, FLQT…NINE, DGFT…DVNV, KGLT…DINA, NNMT…NANA, GLLS…NYNL, GDIT…NINQ, EKYT…NLEA, TGAT…NWRE, NGQM…VLDI, NLDT…KVNT, KGQA…NVYI, DGLN…KFEW, ISHF…GHYS, ICSP…SVDG, KPDT…KVNH, NGMT…DFRR, LDAT…NINI, and NKET…DENI. The segment at 1174–1177 is furin-like endopeptidase recognition region; sequence KFRR. Residues 1178 to 1368 constitute a propeptide that is removed on maturation; the sequence is EYKSSNGEHD…GETLHLFHES (191 aa).

Belongs to the cationic peptide 01 (latrotoxin) family. 03 (alpha-latrotoxin) subfamily. As to quaternary structure, homotetramer in membranes. In terms of tissue distribution, expressed in venom gland, cephalothorax, and abdomen tissues from both males and females.

It localises to the secreted. The protein localises to the target cell membrane. In terms of biological role, presynaptic neurotoxin that causes massive release of neurotransmitters from vertebrate (but not invertebrate) nerve terminals and endocrine cells via a complex mechanism involving activation of receptor(s) and toxin insertion into the plasma membrane with subsequent pore formation. Binds to neurexin-1-alpha (NRXN1) in a calcium dependent manner, adhesion G protein-coupled receptor L1 (ADGRL1, also termed latrophilin-1 and calcium-independent receptor of latrotoxin (CIRL)), and receptor-type tyrosine-protein phosphatase S (PTPRS), also termed PTP sigma. NRXN1 and PTPRS are suggested to provide a platform for binding and subsequent pore formation events. In contrast, binding to ADGRL1 does not involve oligomerization and channel formation, but direct downstream stimulation of the synaptic fusion machinery. This is Alpha-latrotoxin-Lg1a from Latrodectus geometricus (Brown widow spider).